A 269-amino-acid chain; its full sequence is Cytochrome c oxidase subunit 3 (269 aa).

7 helical membrane-spanning segments follow: residues 21 to 41, 45 to 65, 90 to 110, 138 to 160, 167 to 187, 205 to 225, and 247 to 267; these read PWPIVVSFALMSLALSLALTM, IGHMYLIYLSILTVTLSATLW, GFLLFVVSEILIFAALFWAYF, PLLNTIILLSSGATITYSHHGLV, ALSGLLITFWLIVIFVTCQYI, FYAGTGLHFLHMVMLAAMLGI, and VLYCHILDIIWLFLYIVFYWW.

The protein belongs to the cytochrome c oxidase subunit 3 family. Component of the cytochrome c oxidase (complex IV, CIV), a multisubunit enzyme composed of a catalytic core of 3 subunits and several supernumerary subunits. The complex exists as a monomer or a dimer and forms supercomplexes (SCs) in the inner mitochondrial membrane with ubiquinol-cytochrome c oxidoreductase (cytochrome b-c1 complex, complex III, CIII).

It is found in the mitochondrion inner membrane. It carries out the reaction 4 Fe(II)-[cytochrome c] + O2 + 8 H(+)(in) = 4 Fe(III)-[cytochrome c] + 2 H2O + 4 H(+)(out). In terms of biological role, component of the cytochrome c oxidase, the last enzyme in the mitochondrial electron transport chain which drives oxidative phosphorylation. The respiratory chain contains 3 multisubunit complexes succinate dehydrogenase (complex II, CII), ubiquinol-cytochrome c oxidoreductase (cytochrome b-c1 complex, complex III, CIII) and cytochrome c oxidase (complex IV, CIV), that cooperate to transfer electrons derived from NADH and succinate to molecular oxygen, creating an electrochemical gradient over the inner membrane that drives transmembrane transport and the ATP synthase. Cytochrome c oxidase is the component of the respiratory chain that catalyzes the reduction of oxygen to water. Electrons originating from reduced cytochrome c in the intermembrane space (IMS) are transferred via the dinuclear copper A center (CU(A)) of subunit 2 and heme A of subunit 1 to the active site in subunit 1, a binuclear center (BNC) formed by heme A3 and copper B (CU(B)). The BNC reduces molecular oxygen to 2 water molecules using 4 electrons from cytochrome c in the IMS and 4 protons from the mitochondrial matrix. This Kluyveromyces lactis (strain ATCC 8585 / CBS 2359 / DSM 70799 / NBRC 1267 / NRRL Y-1140 / WM37) (Yeast) protein is Cytochrome c oxidase subunit 3 (COX3).